Reading from the N-terminus, the 309-residue chain is Heme A synthase (309 aa).

The Cytoplasmic segment spans residues 1-6 (MTKKLK). The chain crosses the membrane as a helical span at residues 7–27 (ILSVISTICMIPLLLGGALVT). Residues 28–62 (KTGSADGCGNSWPLCEGQFLPTKISFEMFIELSHR) are Extracellular-facing. A disulfide bridge links Cys35 with Cys42. Residue Glu58 is part of the active site. His61 contributes to the heme o binding site. Residues 63–83 (GVTGVVGILIVYLTYLVWKEL) traverse the membrane as a helical segment. Topologically, residues 84–88 (RHNKE) are cytoplasmic. Residues 89–109 (VVFLAFSALSLMILQALIGAA) form a helical membrane-spanning segment. Residues 110–123 (AVVWGQSDFALATH) are Extracellular-facing. A heme o-binding site is contributed by His123. The chain crosses the membrane as a helical span at residues 124-144 (FGISLVCFAAVFLLMLQLFEI). At 145 to 159 (DKKLHTEDIHINKTH) the chain is on the cytoplasmic side. Residues 160 to 180 (RIEIYAISFYTMCVVYSGALV) form a helical membrane-spanning segment. Over 181 to 211 (RHTDSNLACRDWPLCVNNSSFGISDYNFYQW) the chain is Extracellular. Cys189 and Cys195 are oxidised to a cystine. The helical transmembrane segment at 212-232 (VQMGHRLAAGILFIWTVILTI) threads the bilayer. Position 216 (His216) interacts with heme b. At 233–247 (RMVKHYKNSKVFYWS) the chain is on the cytoplasmic side. A helical membrane pass occupies residues 248-268 (WLITLGLITLQVLFGALIIFT). The Extracellular portion of the chain corresponds to 269–271 (SLN). A helical transmembrane segment spans residues 272-292 (LAIALFHALFITCYFGMLSFF). Heme b is bound at residue His278. The Cytoplasmic segment spans residues 293–309 (MHLSFRAKRREKYSNQS).

This sequence belongs to the COX15/CtaA family. Type 1 subfamily. Interacts with CtaB. Requires heme b as cofactor.

Its subcellular location is the cell membrane. The enzyme catalyses Fe(II)-heme o + 2 A + H2O = Fe(II)-heme a + 2 AH2. It participates in porphyrin-containing compound metabolism; heme A biosynthesis; heme A from heme O: step 1/1. Its function is as follows. Catalyzes the conversion of heme O to heme A by two successive hydroxylations of the methyl group at C8. The first hydroxylation forms heme I, the second hydroxylation results in an unstable dihydroxymethyl group, which spontaneously dehydrates, resulting in the formyl group of heme A. The protein is Heme A synthase of Oceanobacillus iheyensis (strain DSM 14371 / CIP 107618 / JCM 11309 / KCTC 3954 / HTE831).